A 570-amino-acid polypeptide reads, in one-letter code: Proline--tRNA ligase (570 aa).

It belongs to the class-II aminoacyl-tRNA synthetase family. ProS type 1 subfamily. In terms of assembly, homodimer.

It localises to the cytoplasm. The catalysed reaction is tRNA(Pro) + L-proline + ATP = L-prolyl-tRNA(Pro) + AMP + diphosphate. In terms of biological role, catalyzes the attachment of proline to tRNA(Pro) in a two-step reaction: proline is first activated by ATP to form Pro-AMP and then transferred to the acceptor end of tRNA(Pro). As ProRS can inadvertently accommodate and process non-cognate amino acids such as alanine and cysteine, to avoid such errors it has two additional distinct editing activities against alanine. One activity is designated as 'pretransfer' editing and involves the tRNA(Pro)-independent hydrolysis of activated Ala-AMP. The other activity is designated 'posttransfer' editing and involves deacylation of mischarged Ala-tRNA(Pro). The misacylated Cys-tRNA(Pro) is not edited by ProRS. This chain is Proline--tRNA ligase, found in Shewanella pealeana (strain ATCC 700345 / ANG-SQ1).